Here is a 481-residue protein sequence, read N- to C-terminus: Argininosuccinate lyase (481 aa).

It belongs to the lyase 1 family. Argininosuccinate lyase subfamily.

It is found in the cytoplasm. It carries out the reaction 2-(N(omega)-L-arginino)succinate = fumarate + L-arginine. Its pathway is amino-acid biosynthesis; L-arginine biosynthesis; L-arginine from L-ornithine and carbamoyl phosphate: step 3/3. The chain is Argininosuccinate lyase from Methanococcus maripaludis (strain DSM 14266 / JCM 13030 / NBRC 101832 / S2 / LL).